The following is a 286-amino-acid chain: Light-independent protochlorophyllide reductase iron-sulfur ATP-binding protein (286 aa).

ATP is bound by residues 10 to 15 (GIGKST) and Lys-39. Ser-14 contacts Mg(2+). Positions 95 and 129 each coordinate [4Fe-4S] cluster. 180–181 (NR) serves as a coordination point for ATP.

This sequence belongs to the NifH/BchL/ChlL family. In terms of assembly, homodimer. Protochlorophyllide reductase is composed of three subunits; ChlL, ChlN and ChlB. Requires [4Fe-4S] cluster as cofactor.

It carries out the reaction chlorophyllide a + oxidized 2[4Fe-4S]-[ferredoxin] + 2 ADP + 2 phosphate = protochlorophyllide a + reduced 2[4Fe-4S]-[ferredoxin] + 2 ATP + 2 H2O. It functions in the pathway porphyrin-containing compound metabolism; chlorophyll biosynthesis (light-independent). Its function is as follows. Component of the dark-operative protochlorophyllide reductase (DPOR) that uses Mg-ATP and reduced ferredoxin to reduce ring D of protochlorophyllide (Pchlide) to form chlorophyllide a (Chlide). This reaction is light-independent. The L component serves as a unique electron donor to the NB-component of the complex, and binds Mg-ATP. The polypeptide is Light-independent protochlorophyllide reductase iron-sulfur ATP-binding protein (Cyanothece sp. (strain PCC 7425 / ATCC 29141)).